A 691-amino-acid chain; its full sequence is Threonine--tRNA ligase (691 aa).

The TGS domain maps to 1–66 (MSAPARPAPA…DADVDVIPVT (66 aa)). Positions 265-571 (DHRKLGVELD…LTEHYAGAFP (307 aa)) are catalytic. Zn(2+) is bound by residues Cys-370, His-421, and His-548.

The protein belongs to the class-II aminoacyl-tRNA synthetase family. Homodimer. The cofactor is Zn(2+).

The protein localises to the cytoplasm. It catalyses the reaction tRNA(Thr) + L-threonine + ATP = L-threonyl-tRNA(Thr) + AMP + diphosphate + H(+). In terms of biological role, catalyzes the attachment of threonine to tRNA(Thr) in a two-step reaction: L-threonine is first activated by ATP to form Thr-AMP and then transferred to the acceptor end of tRNA(Thr). Also edits incorrectly charged L-seryl-tRNA(Thr). This is Threonine--tRNA ligase from Mycolicibacterium vanbaalenii (strain DSM 7251 / JCM 13017 / BCRC 16820 / KCTC 9966 / NRRL B-24157 / PYR-1) (Mycobacterium vanbaalenii).